Consider the following 474-residue polypeptide: Bifunctional protein HldE (474 aa).

Residues 1 to 317 (MKLSMPRFDQ…RRAIQRSEGS (317 aa)) form a ribokinase region. ATP is bound at residue 194-197 (NLSE). The active site involves aspartate 263. Positions 343 to 474 (FTNGCFDILH…AIVEKIRNNE (132 aa)) are cytidylyltransferase.

The protein in the N-terminal section; belongs to the carbohydrate kinase PfkB family. In the C-terminal section; belongs to the cytidylyltransferase family. Homodimer.

The enzyme catalyses D-glycero-beta-D-manno-heptose 7-phosphate + ATP = D-glycero-beta-D-manno-heptose 1,7-bisphosphate + ADP + H(+). It catalyses the reaction D-glycero-beta-D-manno-heptose 1-phosphate + ATP + H(+) = ADP-D-glycero-beta-D-manno-heptose + diphosphate. Its pathway is nucleotide-sugar biosynthesis; ADP-L-glycero-beta-D-manno-heptose biosynthesis; ADP-L-glycero-beta-D-manno-heptose from D-glycero-beta-D-manno-heptose 7-phosphate: step 1/4. It functions in the pathway nucleotide-sugar biosynthesis; ADP-L-glycero-beta-D-manno-heptose biosynthesis; ADP-L-glycero-beta-D-manno-heptose from D-glycero-beta-D-manno-heptose 7-phosphate: step 3/4. Its function is as follows. Catalyzes the phosphorylation of D-glycero-D-manno-heptose 7-phosphate at the C-1 position to selectively form D-glycero-beta-D-manno-heptose-1,7-bisphosphate. Functionally, catalyzes the ADP transfer from ATP to D-glycero-beta-D-manno-heptose 1-phosphate, yielding ADP-D-glycero-beta-D-manno-heptose. This Pseudomonas fluorescens (strain SBW25) protein is Bifunctional protein HldE.